The following is a 248-amino-acid chain: Ribonuclease 3 (248 aa).

Positions 15-142 (LKAFFKQYHV…MIAALYLDLG (128 aa)) constitute an RNase III domain. Residue Glu-55 participates in Mg(2+) binding. Asp-59 is an active-site residue. Residues Asp-128 and Glu-131 each contribute to the Mg(2+) site. Glu-131 is an active-site residue. Positions 169-240 (DYKTELQEFL…ARDALQKLAT (72 aa)) constitute a DRBM domain.

The protein belongs to the ribonuclease III family. As to quaternary structure, homodimer. Mg(2+) serves as cofactor.

The protein resides in the cytoplasm. It catalyses the reaction Endonucleolytic cleavage to 5'-phosphomonoester.. In terms of biological role, digests double-stranded RNA. Involved in the processing of primary rRNA transcript to yield the immediate precursors to the large and small rRNAs (23S and 16S). Processes some mRNAs, and tRNAs when they are encoded in the rRNA operon. Processes pre-crRNA and tracrRNA of type II CRISPR loci if present in the organism. The sequence is that of Ribonuclease 3 from Spiroplasma citri.